Here is a 480-residue protein sequence, read N- to C-terminus: MDFQSCLYAIAEELGSEDLAALKFLCLDYIPHKKQETIEDAQKLFLRLREKGMLEEGNLSFLKELLFHISRWDLLVNFLDCNREEMVRELRDPDNAQISPYRVMLFKLSEEVSELELRSFKFLLNNEIPKCKLEDDLSLLEIFVEMEKRTMLAENNLETLKSICDQVNKSLLGKIEDYERSSTERRMSLEGREELPPSVLDEMSLKMAELCDSPREQDSESRTSDKVYQMKNKPRGYCLIINNHDFSKAREDITQLRKMKDRKGTDCDKEALSKTFKELHFEIVSYDDCTANEIHEILEGYQSADHKNKDCFICCILSHGDKGVVYGTDGKEASIYDLTSYFTGSKCPSLSGKPKIFFIQACQGSNFQKGVPDEAGFEQQNHTLEVDSSSHKNYIPDEADFLLGMATVKNCVSYRDPVNGTWYIQSLCQSLRERCPQGDDILSILTGVNYDVSNKDDRRNKGKQMPQPTFTLRKKLFFPP.

A propeptide spanning residues 1 to 218 (MDFQSCLYAI…ELCDSPREQD (218 aa)) is cleaved from the precursor. DED domains are found at residues 3–80 (FQSC…NFLD) and 101–177 (YRVM…KIED). Residues serine 188 and serine 213 each carry the phosphoserine modification. Lysine 226 carries the N6-acetyllysine modification. The active site involves histidine 319. Position 336 is a phosphotyrosine (tyrosine 336). Cysteine 362 is a catalytic residue. The propeptide occupies 377-387 (FEQQNHTLEVD). Serine 389 is subject to Phosphoserine; by CDK1.

The protein belongs to the peptidase C14A family. As to quaternary structure, heterotetramer that consists of two anti-parallel arranged heterodimers, each one formed by a 18 kDa (p18) and a 10 kDa (p10) subunit. Component of the death-induced signaling complex (DISC) composed of cell surface receptor FAS/CD95 or TNFRSF1A, adapter protein FADD and the CASP8 protease; recruitment of CASP8 to the complex is required for processing of CASP8 into the p18 and p10 subunits. Component of the AIM2 PANoptosome complex, a multiprotein complex that drives inflammatory cell death (PANoptosis). Interacts with CFLAR and PEA15. Interacts with RFFL and RNF34; negatively regulate CASP8 through proteasomal degradation. Interacts with TNFAIP8L2. Interacts with CASP8AP2. Interacts with NOL3; decreases CASP8 activity in a mitochondria localization- and phosphorylation-dependent manner and this interaction is dissociated by calcium. Interacts with UBR2. Interacts with RIPK1. Interacts with stimulated TNFRSF10B; this interaction is followed by CASP8 proteolytic cleavage and activation. In terms of processing, generation of the subunits requires association with the death-inducing signaling complex (DISC), whereas additional processing is likely due to the autocatalytic activity of the activated protease. GZMB and CASP10 can be involved in these processing events. (Microbial infection) Proteolytically cleaved by the cowpox virus CRMA death inhibitory protein. Post-translationally, phosphorylation on Ser-389 during mitosis by CDK1 inhibits activation by proteolysis and prevents apoptosis. This phosphorylation occurs in cancer cell lines, as well as in primary breast tissues and lymphocytes. As to expression, expressed in a wide variety of tissues. Highest expression in spleen, thymus, lung, liver and kidney. Lower expression in heart, brain, testis and skeletal muscle.

Its subcellular location is the cytoplasm. The protein resides in the nucleus. It carries out the reaction Strict requirement for Asp at position P1 and has a preferred cleavage sequence of (Leu/Asp/Val)-Glu-Thr-Asp-|-(Gly/Ser/Ala).. With respect to regulation, CASP8 activity is restricted by RIPK1. Its activity is regulated as follows. (Microbial infection) Inhibited by baculovirus p35 protein P35. Thiol protease that plays a key role in programmed cell death by acting as a molecular switch for apoptosis, necroptosis and pyroptosis, and is required to prevent tissue damage during embryonic development and adulthood. Initiator protease that induces extrinsic apoptosis by mediating cleavage and activation of effector caspases responsible for FAS/CD95-mediated and TNFRSF1A-induced cell death. Cleaves and activates effector caspases CASP3, CASP4, CASP6, CASP7, CASP9 and CASP10. Binding to the adapter molecule FADD recruits it to either receptor FAS/CD95 or TNFRSF1A. The resulting aggregate called the death-inducing signaling complex (DISC) performs CASP8 proteolytic activation. The active dimeric enzyme is then liberated from the DISC and free to activate downstream apoptotic proteases. Proteolytic fragments of the N-terminal propeptide (termed CAP3, CAP5 and CAP6) are likely retained in the DISC. In addition to extrinsic apoptosis, also acts as a negative regulator of necroptosis: acts by cleaving RIPK1 at 'Asp-325', which is crucial to inhibit RIPK1 kinase activity, limiting TNF-induced apoptosis, necroptosis and inflammatory response. Also able to initiate pyroptosis by mediating cleavage and activation of gasdermin-C and -D (GSDMC and GSDMD, respectively): gasdermin cleavage promotes release of the N-terminal moiety that binds to membranes and forms pores, triggering pyroptosis. Initiates pyroptosis following inactivation of MAP3K7/TAK1. Also acts as a regulator of innate immunity by mediating cleavage and inactivation of N4BP1 downstream of TLR3 or TLR4, thereby promoting cytokine production. May participate in the Granzyme B (GZMB) cell death pathways. Cleaves PARP1 and PARP2. In Mus musculus (Mouse), this protein is Caspase-8.